Here is a 236-residue protein sequence, read N- to C-terminus: 2-C-methyl-D-erythritol 4-phosphate cytidylyltransferase (236 aa).

It belongs to the IspD/TarI cytidylyltransferase family. IspD subfamily. As to quaternary structure, homodimer.

The catalysed reaction is 2-C-methyl-D-erythritol 4-phosphate + CTP + H(+) = 4-CDP-2-C-methyl-D-erythritol + diphosphate. It participates in isoprenoid biosynthesis; isopentenyl diphosphate biosynthesis via DXP pathway; isopentenyl diphosphate from 1-deoxy-D-xylulose 5-phosphate: step 2/6. Catalyzes the formation of 4-diphosphocytidyl-2-C-methyl-D-erythritol from CTP and 2-C-methyl-D-erythritol 4-phosphate (MEP). The chain is 2-C-methyl-D-erythritol 4-phosphate cytidylyltransferase from Escherichia coli O139:H28 (strain E24377A / ETEC).